Here is a 61-residue protein sequence, read N- to C-terminus: uncharacterized protein (61 aa).

A helical transmembrane segment spans residues arginine 10–proline 27.

The protein localises to the membrane. This is an uncharacterized protein from Dictyostelium discoideum (Social amoeba).